The chain runs to 232 residues: Aliphatic sulfonates import ATP-binding protein SsuB 2 (232 aa).

One can recognise an ABC transporter domain in the interval 1-216 (MDIRVDRKAF…PRDRRDPLLA (216 aa)). An ATP-binding site is contributed by 33–40 (GPSGCGKS).

The protein belongs to the ABC transporter superfamily. Aliphatic sulfonates importer (TC 3.A.1.17.2) family. In terms of assembly, the complex is composed of two ATP-binding proteins (SsuB), two transmembrane proteins (SsuC) and a solute-binding protein (SsuA).

The protein resides in the cell inner membrane. The catalysed reaction is ATP + H2O + aliphatic sulfonate-[sulfonate-binding protein]Side 1 = ADP + phosphate + aliphatic sulfonateSide 2 + [sulfonate-binding protein]Side 1.. Its function is as follows. Part of the ABC transporter complex SsuABC involved in aliphatic sulfonates import. Responsible for energy coupling to the transport system. The sequence is that of Aliphatic sulfonates import ATP-binding protein SsuB 2 from Pseudomonas syringae pv. tomato (strain ATCC BAA-871 / DC3000).